The primary structure comprises 178 residues: ATP-dependent protease subunit HslV (178 aa).

Threonine 8 is a catalytic residue. Na(+) is bound by residues glycine 163, cysteine 166, and threonine 169.

This sequence belongs to the peptidase T1B family. HslV subfamily. As to quaternary structure, a double ring-shaped homohexamer of HslV is capped on each side by a ring-shaped HslU homohexamer. The assembly of the HslU/HslV complex is dependent on binding of ATP.

It localises to the cytoplasm. The enzyme catalyses ATP-dependent cleavage of peptide bonds with broad specificity.. With respect to regulation, allosterically activated by HslU binding. In terms of biological role, protease subunit of a proteasome-like degradation complex believed to be a general protein degrading machinery. In Xylella fastidiosa (strain 9a5c), this protein is ATP-dependent protease subunit HslV.